The chain runs to 99 residues: Carboxysome shell vertex protein CcmL (99 aa).

Residues 1–83 (MRIAKVRGTV…VDAAVIAIID (83 aa)) enclose the BMV domain.

It belongs to the CcmL/EutN family. CcmL subfamily. As to quaternary structure, homopentamer. Interacts with full-length CcmM.

It is found in the carboxysome. In terms of biological role, probably forms vertices in the carboxysome, a polyhedral inclusion where RuBisCO (ribulose bisphosphate carboxylase, rbcL-rbcS) is sequestered. Has been modeled to induce curvature upon insertion into an otherwise flat hexagonal molecular layer of CcmK subunits. Functionally, beta-carboxysome assembly initiates when soluble RuBisCO is condensed into a liquid matrix in a pre-carboxysome by the RbcS-like domains of probably both CcmM58 and CcmM35. CcmN interacts with the N-terminus of CcmM58, and then recruits the CcmK2 major shell protein via CcmN's encapsulation peptide. Shell formation requires CcmK proteins and CcmO. CcmL caps the otherwise elongated carboxysome. Once fully encapsulated carboxysomes are formed, they migrate within the cell probably via interactions with the cytoskeleton. In Synechococcus elongatus (strain ATCC 33912 / PCC 7942 / FACHB-805) (Anacystis nidulans R2), this protein is Carboxysome shell vertex protein CcmL.